Consider the following 506-residue polypeptide: Nucleoside import ATP-binding protein NupA (506 aa).

2 consecutive ABC transporter domains span residues isoleucine 7–serine 242 and leucine 259–asparagine 503. Glycine 39 to serine 46 serves as a coordination point for ATP.

It belongs to the ABC transporter superfamily. The complex is composed of two ATP-binding proteins (NupA), two transmembrane proteins (NupB and NupC) and a solute-binding protein (BmpA).

The protein localises to the cell membrane. Functionally, part of an ABC transporter complex involved in the uptake of all common nucleosides. Responsible for energy coupling to the transport system. The chain is Nucleoside import ATP-binding protein NupA from Lactococcus lactis subsp. cremoris (strain MG1363).